Consider the following 207-residue polypeptide: Ribonuclease HII (207 aa).

The RNase H type-2 domain occupies 12–201 (DLVAGVDEVG…VRAAWEAREG (190 aa)). 3 residues coordinate a divalent metal cation: Asp18, Glu19, and Asp110.

This sequence belongs to the RNase HII family. Requires Mn(2+) as cofactor. Mg(2+) serves as cofactor.

Its subcellular location is the cytoplasm. The enzyme catalyses Endonucleolytic cleavage to 5'-phosphomonoester.. Endonuclease that specifically degrades the RNA of RNA-DNA hybrids. In Pseudomonas putida (strain ATCC 47054 / DSM 6125 / CFBP 8728 / NCIMB 11950 / KT2440), this protein is Ribonuclease HII.